The following is a 25-amino-acid chain: M-poneritoxin-Nc2a (25 aa).

It belongs to the ponericin-L family. Expressed by the venom gland.

Its subcellular location is the secreted. It localises to the target cell membrane. Its function is as follows. Membrane-perturbating peptide with multiple activities. It is insecticidal, since it induces reversible paralysis in insects (L.cuprina) after 1 hour, but fails to kill them. It shows moderate antibacterial activity against some Gram-positive and Gram-negative bacteria. It is also antiparasitic, since it moderately inhibits the larval development of the major pathogenic nematode of ruminants (H.contortus, IC(50)=23.2 uM), but fails to reduce the motility of adult males of the other nematode B.malayi. It also shows moderate cytotoxic activity against HEK293 cells (EC(50)=48-57 uM) but does not induce hemolysis in human erythrocytes. It also causes a moderate increase in intracellular calcium concentration on neuronal and epithelial cell lines, which supports a non-specific membrane perturbation mechanism of action. This is M-poneritoxin-Nc2a from Neoponera commutata (Large hunting ant).